An 85-amino-acid chain; its full sequence is UPF0434 protein HNE_3545 (85 aa).

This sequence belongs to the UPF0434 family.

The polypeptide is UPF0434 protein HNE_3545 (Hyphomonas neptunium (strain ATCC 15444)).